Reading from the N-terminus, the 262-residue chain is Ribosomal RNA small subunit methyltransferase G (262 aa).

S-adenosyl-L-methionine is bound by residues G72, L77, and R142. The segment at 212 to 262 is disordered; it reads RSSQLSRAEGRKGRGDGERHDGRQVRRTARDSRRSREVDRDQPTRGQSRST. Residues 219 to 254 are compositionally biased toward basic and acidic residues; the sequence is AEGRKGRGDGERHDGRQVRRTARDSRRSREVDRDQP.

It belongs to the methyltransferase superfamily. RNA methyltransferase RsmG family.

It localises to the cytoplasm. In terms of biological role, specifically methylates the N7 position of guanine in position 518 of 16S rRNA. This is Ribosomal RNA small subunit methyltransferase G from Frankia alni (strain DSM 45986 / CECT 9034 / ACN14a).